The primary structure comprises 385 residues: Ribosomal RNA large subunit methyltransferase G (385 aa).

This sequence belongs to the methyltransferase superfamily. RlmG family.

It is found in the cytoplasm. The catalysed reaction is guanosine(1835) in 23S rRNA + S-adenosyl-L-methionine = N(2)-methylguanosine(1835) in 23S rRNA + S-adenosyl-L-homocysteine + H(+). Specifically methylates the guanine in position 1835 (m2G1835) of 23S rRNA. This chain is Ribosomal RNA large subunit methyltransferase G, found in Vibrio campbellii (strain ATCC BAA-1116).